The primary structure comprises 272 residues: Formamidopyrimidine-DNA glycosylase (272 aa).

The Schiff-base intermediate with DNA role is filled by Pro-2. The active-site Proton donor is Glu-3. The active-site Proton donor; for beta-elimination activity is Lys-56. The DNA site is built by His-89, Arg-108, and Lys-149. The segment at Leu-234–Pro-268 adopts an FPG-type zinc-finger fold. Arg-258 functions as the Proton donor; for delta-elimination activity in the catalytic mechanism.

It belongs to the FPG family. Monomer. It depends on Zn(2+) as a cofactor.

The catalysed reaction is Hydrolysis of DNA containing ring-opened 7-methylguanine residues, releasing 2,6-diamino-4-hydroxy-5-(N-methyl)formamidopyrimidine.. It catalyses the reaction 2'-deoxyribonucleotide-(2'-deoxyribose 5'-phosphate)-2'-deoxyribonucleotide-DNA = a 3'-end 2'-deoxyribonucleotide-(2,3-dehydro-2,3-deoxyribose 5'-phosphate)-DNA + a 5'-end 5'-phospho-2'-deoxyribonucleoside-DNA + H(+). Involved in base excision repair of DNA damaged by oxidation or by mutagenic agents. Acts as a DNA glycosylase that recognizes and removes damaged bases. Has a preference for oxidized purines, such as 7,8-dihydro-8-oxoguanine (8-oxoG). Has AP (apurinic/apyrimidinic) lyase activity and introduces nicks in the DNA strand. Cleaves the DNA backbone by beta-delta elimination to generate a single-strand break at the site of the removed base with both 3'- and 5'-phosphates. The sequence is that of Formamidopyrimidine-DNA glycosylase from Acinetobacter baylyi (strain ATCC 33305 / BD413 / ADP1).